A 198-amino-acid chain; its full sequence is tRNA (pseudouridine(54)-N(1))-methyltransferase (198 aa).

Residues L130, G153, 176–181 (LSPLEL), and C186 contribute to the S-adenosyl-L-methionine site.

This sequence belongs to the methyltransferase superfamily. TrmY family. As to quaternary structure, homodimer.

It is found in the cytoplasm. It catalyses the reaction pseudouridine(54) in tRNA + S-adenosyl-L-methionine = N(1)-methylpseudouridine(54) in tRNA + S-adenosyl-L-homocysteine + H(+). Functionally, specifically catalyzes the N1-methylation of pseudouridine at position 54 (Psi54) in tRNAs. The sequence is that of tRNA (pseudouridine(54)-N(1))-methyltransferase from Methanococcus vannielii (strain ATCC 35089 / DSM 1224 / JCM 13029 / OCM 148 / SB).